A 1198-amino-acid polypeptide reads, in one-letter code: Tetratricopeptide repeat protein 17 (1198 aa).

The TPR 1 repeat unit spans residues 295-328 (FTSYYTLGNIYAMLGEYNHSVLCYDHALQAKPGF). Residues 340–382 (CQQKLEQKLEAQHRSLQRTLNELKEYQKQHDHYLRQQEILEKH) are a coiled coil. TPR repeat units lie at residues 619–652 (WLIL…APVQ) and 689–722 (PLTF…TTRC). 2 disordered regions span residues 771-825 (PQSL…KSEE) and 903-924 (KKPK…QAEN). Residues 903–914 (KKPKGDHKKPPG) show a composition bias toward basic residues. 3 TPR repeats span residues 1071 to 1105 (SWVL…APHQ), 1108 to 1141 (DVPL…APHF), and 1142 to 1175 (AVNH…QPEF).

The protein belongs to the TTC17 family. As to quaternary structure, interacts with CATIP. In terms of tissue distribution, expressed in germ cells as well as in somatic cells of the testis (at protein level). Ubiquitous.

The protein resides in the cytoplasm. It is found in the cell membrane. The protein localises to the cytoskeleton. Its function is as follows. Plays a role in primary ciliogenesis by modulating actin polymerization. The chain is Tetratricopeptide repeat protein 17 (Ttc17) from Rattus norvegicus (Rat).